A 297-amino-acid polypeptide reads, in one-letter code: 4-hydroxy-tetrahydrodipicolinate synthase (297 aa).

Thr47 provides a ligand contact to pyruvate. Tyr135 (proton donor/acceptor) is an active-site residue. Lys163 (schiff-base intermediate with substrate) is an active-site residue. Ile205 contacts pyruvate.

It belongs to the DapA family. As to quaternary structure, homotetramer; dimer of dimers.

It is found in the cytoplasm. It carries out the reaction L-aspartate 4-semialdehyde + pyruvate = (2S,4S)-4-hydroxy-2,3,4,5-tetrahydrodipicolinate + H2O + H(+). It functions in the pathway amino-acid biosynthesis; L-lysine biosynthesis via DAP pathway; (S)-tetrahydrodipicolinate from L-aspartate: step 3/4. Functionally, catalyzes the condensation of (S)-aspartate-beta-semialdehyde [(S)-ASA] and pyruvate to 4-hydroxy-tetrahydrodipicolinate (HTPA). This Dehalococcoides mccartyi (strain ATCC BAA-2266 / KCTC 15142 / 195) (Dehalococcoides ethenogenes (strain 195)) protein is 4-hydroxy-tetrahydrodipicolinate synthase.